Here is a 946-residue protein sequence, read N- to C-terminus: Inhibin beta chain (946 aa).

Disordered regions lie at residues 115–142 and 174–194; these read VADR…SSTS and KSRN…RRRR. Low complexity predominate over residues 128 to 142; sequence VSVPTTPNETPSSTS. Residues Asn208, Asn217, Asn271, and Asn389 are each glycosylated (N-linked (GlcNAc...) asparagine). A disordered region spans residues 436–462; that stretch reads SPGSHLFNGRGGRTDQRSERDPSHHKY. Basic and acidic residues predominate over residues 447-459; that stretch reads GRTDQRSERDPSH. Asn471, Asn484, Asn542, Asn561, Asn566, Asn732, and Asn804 each carry an N-linked (GlcNAc...) asparagine glycan. Cystine bridges form between Cys837–Cys846, Cys845–Cys912, Cys874–Cys943, and Cys878–Cys945.

Belongs to the TGF-beta family. In terms of assembly, homodimer or heterodimer; disulfide-linked. Post-translationally, cleaved in vitro by metalloproteases tok and tld to produce a 30 kDa product. Widely expressed in larval brains.

The protein resides in the secreted. Controls several aspects of neuronal morphogenesis; essential for optic lobe development, EcR-B1 expression in larval brains, mushroom body remodeling, dorsal neuron morphogenesis and motoneuron axon guidance. Ligands Actbeta and daw act redundantly through the Activin receptor Babo and its transcriptional mediator Smad2 (Smox), to regulate neuroblast numbers and proliferation rates in the developing larval brain. The chain is Inhibin beta chain (Actbeta) from Drosophila melanogaster (Fruit fly).